A 192-amino-acid polypeptide reads, in one-letter code: uncharacterized protein (192 aa).

Positions 29–160 (QRQAAVLVPI…PLDIHRRGND (132 aa)) constitute a Nudix hydrolase domain. Positions 67–89 (GAVDNTDATLIAAALREAQEEVA) match the Nudix box motif. Glu-83 and Glu-87 together coordinate Mg(2+).

Belongs to the Nudix hydrolase family. PCD1 subfamily. Mn(2+) is required as a cofactor. It depends on Mg(2+) as a cofactor.

Probably mediates the hydrolysis of some nucleoside diphosphate derivatives. This is an uncharacterized protein from Klebsiella pneumoniae (strain 342).